A 242-amino-acid polypeptide reads, in one-letter code: NLP effector protein 8 (242 aa).

A signal peptide spans 1-17 (MHLTVFYLVALCTFASA). A Conserved undecapeptide motif motif is present at residues 108–118 (AIMYAWYFPRD). The short motif at 127–133 (GHRNAWE) is the Conserved heptapeptide motif element. N-linked (GlcNAc...) asparagine glycosylation is present at Asn206.

Belongs to the Necrosis inducing protein (NPP1) family.

The protein resides in the secreted. In terms of biological role, probable secreted effector that may act as a pathogen-associated molecular pattern (PAMP) recognized by the plant immune system. The protein is NLP effector protein 8 of Plasmopara viticola (Downy mildew of grapevine).